Here is a 543-residue protein sequence, read N- to C-terminus: Keratin, type II cytoskeletal 75 (543 aa).

Residues methionine 1–glycine 16 are compositionally biased toward polar residues. The interval methionine 1 to glycine 48 is disordered. The tract at residues methionine 1–glutamate 144 is head. Positions phenylalanine 17 to serine 36 are enriched in low complexity. A coil 1A region spans residues glutamate 145–leucine 180. One can recognise an IF rod domain in the interval glutamate 145–leucine 458. Residues glutamine 181 to tyrosine 199 are linker 1. The coil 1B stretch occupies residues isoleucine 200–glutamine 292. The tract at residues threonine 293–isoleucine 315 is linker 12. Residues isoleucine 316–glutamate 454 form a coil 2 region. Positions glutamate 455–histidine 543 are tail. Residues serine 511–histidine 543 are disordered. A compositionally biased stretch (low complexity) spans serine 526–histidine 543.

The protein belongs to the intermediate filament family. Heterodimer of a type I and a type II keratin. May associate with KRT17.

In terms of biological role, plays a central role in hair and nail formation. Essential component of keratin intermediate filaments in the companion layer of the hair follicle. The protein is Keratin, type II cytoskeletal 75 (KRT75) of Bos taurus (Bovine).